The sequence spans 648 residues: p-hydroxybenzoic acid efflux pump subunit AaeB (648 aa).

A run of 11 helical transmembrane segments spans residues 11–31 (FACKLTLASVLSLLLGFYFGL), 41–61 (AALVAAAPAFAAGGEPFSGAI), 65–87 (GWLRIIGTVLGSLCALLLMMLLI), 91–110 (LLMILLCCLWAGVCTWLSSL), 125–145 (TALIIVVSCLGEPQFILQLAL), 150–170 (EIVLGIVCAVLVDTLLAPRSV), 369–389 (LFWLWSGWSAGSGCMIMIAVV), 406–426 (FLMGSLVALPVGALYYTLILP), 430–450 (QSLVLLCLSLGALTFICGMAV), 458–478 (MGTLASTLNILALSNPMGFPI), and 481–501 (FVDSAIGQMVGCLLALVVLLV).

It belongs to the aromatic acid exporter ArAE (TC 2.A.85) family.

It localises to the cell inner membrane. In terms of biological role, forms an efflux pump with AaeA. Could function as a metabolic relief valve, allowing to eliminate certain compounds when they accumulate to high levels in the cell. This Edwardsiella ictaluri (strain 93-146) protein is p-hydroxybenzoic acid efflux pump subunit AaeB.